The sequence spans 245 residues: UPF0328 protein ECU09_2010 (245 aa).

Belongs to the UPF0328 family.

The polypeptide is UPF0328 protein ECU09_2010 (Encephalitozoon cuniculi (strain GB-M1) (Microsporidian parasite)).